Here is a 38-residue protein sequence, read N- to C-terminus: Large ribosomal subunit protein bL36 (38 aa).

This sequence belongs to the bacterial ribosomal protein bL36 family.

The sequence is that of Large ribosomal subunit protein bL36 from Hamiltonella defensa subsp. Acyrthosiphon pisum (strain 5AT).